Here is a 401-residue protein sequence, read N- to C-terminus: Enoyl-[acyl-carrier-protein] reductase [NADH] (401 aa).

NAD(+) is bound by residues 48–53 (GSSSGY), 74–75 (FE), 111–112 (DA), and 139–140 (LA). Y225 is a substrate binding site. Y235 acts as the Proton donor in catalysis. NAD(+) contacts are provided by residues K244 and 273-275 (VVT).

Belongs to the TER reductase family. As to quaternary structure, monomer.

It catalyses the reaction a 2,3-saturated acyl-[ACP] + NAD(+) = a (2E)-enoyl-[ACP] + NADH + H(+). Its pathway is lipid metabolism; fatty acid biosynthesis. Functionally, involved in the final reduction of the elongation cycle of fatty acid synthesis (FAS II). Catalyzes the reduction of a carbon-carbon double bond in an enoyl moiety that is covalently linked to an acyl carrier protein (ACP). The polypeptide is Enoyl-[acyl-carrier-protein] reductase [NADH] (Shewanella putrefaciens (strain CN-32 / ATCC BAA-453)).